We begin with the raw amino-acid sequence, 549 residues long: Glucose-6-phosphate isomerase (549 aa).

Glutamate 355 functions as the Proton donor in the catalytic mechanism. Active-site residues include histidine 386 and lysine 514.

This sequence belongs to the GPI family.

The protein resides in the cytoplasm. It carries out the reaction alpha-D-glucose 6-phosphate = beta-D-fructose 6-phosphate. Its pathway is carbohydrate biosynthesis; gluconeogenesis. The protein operates within carbohydrate degradation; glycolysis; D-glyceraldehyde 3-phosphate and glycerone phosphate from D-glucose: step 2/4. In terms of biological role, catalyzes the reversible isomerization of glucose-6-phosphate to fructose-6-phosphate. In Aeromonas salmonicida (strain A449), this protein is Glucose-6-phosphate isomerase.